Reading from the N-terminus, the 58-residue chain is Large ribosomal subunit protein bL32 (58 aa).

Residues 1–15 (MAVPKKKTSKAKRNQ) are compositionally biased toward basic residues. A disordered region spans residues 1 to 23 (MAVPKKKTSKAKRNQRSATWKGK).

This sequence belongs to the bacterial ribosomal protein bL32 family.

The protein is Large ribosomal subunit protein bL32 of Synechococcus sp. (strain CC9902).